The primary structure comprises 471 residues: 3-hydroxylaminophenol mutase (471 aa).

The 86-residue stretch at asparagine 15 to glycine 100 folds into the GS beta-grasp domain. One can recognise a GS catalytic domain in the interval proline 107–leucine 471.

This sequence belongs to the glutamine synthetase family.

The catalysed reaction is 3-hydroxyaminophenol = aminohydroquinone. With respect to regulation, is inhibited by H(2)O(2). 1,10-phenanthroline inhibits the activity slightly, but other metal cation chelators such as EDTA or tiron have no effect on the activity. Divalent metal cations and hydroxylamine have also no effect on the activity. Due to the relationship of the protein with glutamine synthetases, glutamate and glutamine were tested as inhibitors; neither preincubation of the compounds with the enzyme nor their addition to the assay buffer affected 3HAP mutase activity. In terms of biological role, catalyzes the isomerization of 3-hydroxylaminophenol (3HAP) to aminohydroquinone, a step in the degradative pathway of 3-nitrophenol. The enzymatic reaction is regiospecific since it leads to the formation of aminohydroquinone exclusively, without producing the isomeric 4-aminocatechol. Can also isomerize other hydroxylaminoaromatic compounds, such as hydroxylaminobenzene to a mixture of 2-aminophenol and 4-aminophenol, 4-hydroxylaminotoluene to 6-amino-m-cresol, and 2-chloro-5-hydroxylaminophenol to 2-amino-5-chlorohydroquinone. Does not act on 4-hydroxylaminobenzoate. In Cupriavidus pinatubonensis (strain JMP 134 / LMG 1197) (Cupriavidus necator (strain JMP 134)), this protein is 3-hydroxylaminophenol mutase.